The primary structure comprises 114 residues: rRNA-processing protein cgrA (114 aa).

The segment covering 1 to 11 has biased composition (polar residues); the sequence is MSSAIPTSSVN. The segment at 1 to 114 is disordered; that stretch reads MSSAIPTSSV…REKRNKLLHS (114 aa). A compositionally biased stretch (basic and acidic residues) spans 39-93; the sequence is YEKRLEARKRQEAVKEHERELREEKEAERKAQIQKIKDRRAAKEEKERYEKMAEK. Positions 40 to 101 form a coiled coil; it reads EKRLEARKRQ…EKMHRKRVER (62 aa). Over residues 94–114 the composition is skewed to basic residues; that stretch reads MHRKRVERLKRREKRNKLLHS.

Belongs to the CGR1 family.

It is found in the nucleus. It localises to the nucleolus. Its function is as follows. Involved in nucleolar integrity and required for processing of the pre-rRNA for the 60S ribosome subunit. The protein is rRNA-processing protein cgrA (cgrA) of Aspergillus fumigatus (strain ATCC MYA-4609 / CBS 101355 / FGSC A1100 / Af293) (Neosartorya fumigata).